Here is a 117-residue protein sequence, read N- to C-terminus: Large ribosomal subunit protein uL18 (117 aa).

The protein belongs to the universal ribosomal protein uL18 family. Part of the 50S ribosomal subunit; part of the 5S rRNA/L5/L18/L25 subcomplex. Contacts the 5S and 23S rRNAs.

This is one of the proteins that bind and probably mediate the attachment of the 5S RNA into the large ribosomal subunit, where it forms part of the central protuberance. This Actinobacillus pleuropneumoniae serotype 5b (strain L20) protein is Large ribosomal subunit protein uL18.